The chain runs to 600 residues: NADH-quinone oxidoreductase subunit C/D (600 aa).

Positions 1-190 are NADH dehydrogenase I subunit C; that stretch reads MVNNMTDLTA…DPFELTKAKQ (190 aa). The segment at 214-600 is NADH dehydrogenase I subunit D; sequence DFMFLNLGPN…IDFVMSDVDR (387 aa).

In the N-terminal section; belongs to the complex I 30 kDa subunit family. The protein in the C-terminal section; belongs to the complex I 49 kDa subunit family. NDH-1 is composed of 13 different subunits. Subunits NuoB, CD, E, F, and G constitute the peripheral sector of the complex.

It localises to the cell inner membrane. The catalysed reaction is a quinone + NADH + 5 H(+)(in) = a quinol + NAD(+) + 4 H(+)(out). In terms of biological role, NDH-1 shuttles electrons from NADH, via FMN and iron-sulfur (Fe-S) centers, to quinones in the respiratory chain. The immediate electron acceptor for the enzyme in this species is believed to be ubiquinone. Couples the redox reaction to proton translocation (for every two electrons transferred, four hydrogen ions are translocated across the cytoplasmic membrane), and thus conserves the redox energy in a proton gradient. This Citrobacter koseri (strain ATCC BAA-895 / CDC 4225-83 / SGSC4696) protein is NADH-quinone oxidoreductase subunit C/D.